A 434-amino-acid polypeptide reads, in one-letter code: Salicylate hydroxylase (434 aa).

9–38 is a binding site for FAD; sequence RIGIVGGGISGVALALELCRYSHIQVQLFE.

In terms of assembly, monomer. FAD is required as a cofactor.

It carries out the reaction salicylate + NADH + O2 + 2 H(+) = catechol + CO2 + NAD(+) + H2O. It participates in aromatic compound metabolism; naphthalene degradation. The polypeptide is Salicylate hydroxylase (nahG) (Pseudomonas putida (Arthrobacter siderocapsulatus)).